Consider the following 360-residue polypeptide: Peptide chain release factor 1 (360 aa).

Glutamine 237 is subject to N5-methylglutamine.

The protein belongs to the prokaryotic/mitochondrial release factor family. Methylated by PrmC. Methylation increases the termination efficiency of RF1.

Its subcellular location is the cytoplasm. Its function is as follows. Peptide chain release factor 1 directs the termination of translation in response to the peptide chain termination codons UAG and UAA. The sequence is that of Peptide chain release factor 1 from Pseudomonas syringae pv. syringae (strain B728a).